Consider the following 101-residue polypeptide: MALTSIFGGSSSSSGTPATSSPSDVKTQLKSQISQELAIANATELVNKVTENCFEKCLNAPYAASQDNCVDQCLAKYMRSWNAISKAYINRIQQASVNGEI.

A compositionally biased stretch (low complexity) spans M1–S23. The disordered stretch occupies residues M1–T27. A Twin CX3C motif motif is present at residues C53 to C73. 2 cysteine pairs are disulfide-bonded: C53–C73 and C57–C69.

This sequence belongs to the small Tim family. Heterohexamer; composed of 3 copies of TIM8 and 3 copies of TIM13, named soluble 70 kDa complex. Associates with the TIM22 complex, whose core is composed of TIM22 and TIM54. Interacts with the transmembrane regions of multi-pass transmembrane proteins in transit.

Its subcellular location is the mitochondrion inner membrane. Mitochondrial intermembrane chaperone that participates in the import and insertion of some multi-pass transmembrane proteins into the mitochondrial inner membrane. Also required for the transfer of beta-barrel precursors from the TOM complex to the sorting and assembly machinery (SAM complex) of the outer membrane. Acts as a chaperone-like protein that protects the hydrophobic precursors from aggregation and guide them through the mitochondrial intermembrane space. The TIM8-TIM13 complex is non essential and only mediates the import of few proteins, while the predominant TIM9-TIM10 70 kDa complex is crucial and mediates the import of much more proteins. In Kluyveromyces lactis (strain ATCC 8585 / CBS 2359 / DSM 70799 / NBRC 1267 / NRRL Y-1140 / WM37) (Yeast), this protein is Mitochondrial import inner membrane translocase subunit TIM13 (TIM13).